A 186-amino-acid chain; its full sequence is Protein TRL14 (186 aa).

N24, N64, and N72 each carry an N-linked (GlcNAc...) asparagine; by host glycan. Residues 143-163 traverse the membrane as a helical segment; the sequence is HAVWAGVVVSVALIALYMGSH.

Belongs to the RL11 family.

The protein resides in the virion membrane. This is Protein TRL14 from Human cytomegalovirus (strain AD169) (HHV-5).